Here is a 308-residue protein sequence, read N- to C-terminus: GTP-binding protein RAD (308 aa).

Gly residues predominate over residues 1–16 (MTLNGGGSGAGGSRGG). The tract at residues 1-88 (MTLNGGGSGA…SLSSGGSDSD (88 aa)) is disordered. Arginine 24 carries the post-translational modification Omega-N-methylarginine. Serine 26 is subject to Phosphoserine. Residues 48–68 (QAALTPGALTAAAAGTGTQGP) are compositionally biased toward low complexity. GTP contacts are provided by residues 98 to 105 (GAPGVGKS) and 203 to 206 (NKSD). Positions 278-297 (AKRFLGRIVARNSRKMAFRA) are calmodulin-binding.

It belongs to the small GTPase superfamily. RGK family. As to quaternary structure, interacts with calmodulin preferentially in the inactive, GDP-bound form. Binds CAMKII which is capable of phosphorylating RAD in vitro. Interacts with CAMK2D. Interacts with CACNB2; interaction may be involved in beta-adrenergic regulation of heart rate and contractile force. Interaction with CACNB2 regulates the trafficking of CACNA1C to the cell membrane. As to expression, most abundantly expressed in the heart. Also found in the skeletal muscle and lung. Lesser amounts in placenta and kidney. Also detected in adipose tissue. Overexpressed in muscle of type II diabetic humans.

It is found in the cell membrane. May regulate basal voltage-dependent L-type Ca(2+) currents and be required for beta-adrenergic augmentation of Ca(2+) influx in cardiomyocytes, thereby regulating increases in heart rate and contractile force. May play an important role in cardiac antiarrhythmia via the strong suppression of voltage-gated L-type Ca(2+) currents. Regulates voltage-dependent L-type calcium channel subunit alpha-1C trafficking to the cell membrane. Inhibits cardiac hypertrophy through the calmodulin-dependent kinase II (CaMKII) pathway. Inhibits phosphorylation and activation of CAMK2D. This is GTP-binding protein RAD (RRAD) from Homo sapiens (Human).